A 388-amino-acid polypeptide reads, in one-letter code: tRNA(Ile)-lysidine synthase (388 aa).

51–56 serves as a coordination point for ATP; it reads SGGRDS.

Belongs to the tRNA(Ile)-lysidine synthase family.

Its subcellular location is the cytoplasm. It catalyses the reaction cytidine(34) in tRNA(Ile2) + L-lysine + ATP = lysidine(34) in tRNA(Ile2) + AMP + diphosphate + H(+). Ligates lysine onto the cytidine present at position 34 of the AUA codon-specific tRNA(Ile) that contains the anticodon CAU, in an ATP-dependent manner. Cytidine is converted to lysidine, thus changing the amino acid specificity of the tRNA from methionine to isoleucine. This is tRNA(Ile)-lysidine synthase from Bifidobacterium longum (strain DJO10A).